The following is a 181-amino-acid chain: Neuroblastoma suppressor of tumorigenicity 1 (181 aa).

Residues 1-16 (MMLRVLVGAVLPAMLL) form the signal peptide. 5 disulfide bridges follow: C35–C85, C49–C99, C59–C118, C63–C120, and C82–C123. Residues 35–124 (CEAKNITQIV…ILHCSCQACG (90 aa)) enclose the CTCK domain. Positions 132 to 181 (LSVYVQGEDGPGSQPGTHPHPHPHPHPGGQTPEPEDPPGAPHTEEEGAED) are disordered.

Belongs to the DAN family. Homodimer. In terms of tissue distribution, most abundant in normal lung and meningioma.

Its subcellular location is the secreted. Possible candidate as a tumor suppressor gene of neuroblastoma. May play an important role in preventing cells from entering the final stage (G1/S) of the transformation process. The protein is Neuroblastoma suppressor of tumorigenicity 1 (NBL1) of Homo sapiens (Human).